The chain runs to 422 residues: 5-hydroxytryptamine receptor 1A (422 aa).

The disordered stretch occupies residues 1-23 (MDVLSPGQGNNTTSPPAPFETGG). At 1–38 (MDVLSPGQGNNTTSPPAPFETGGNTTGISDVTFSYQVI) the chain is on the extracellular side. N-linked (GlcNAc...) asparagine glycans are attached at residues Asn10, Asn11, and Asn24. A helical transmembrane segment spans residues 39–59 (TSLLLGTLIFCAVLGNACVVA). The Cytoplasmic portion of the chain corresponds to 60 to 73 (AIALERSLQNVANY). The chain crosses the membrane as a helical span at residues 74–98 (LIGSLAVTDLMVSVLVLPMAALYQV). The Extracellular portion of the chain corresponds to 99–107 (LNKWTLGQV). The helical transmembrane segment at 108–132 (TCDLFIALDVLCCTSSILHLCAIAL) threads the bilayer. Cys109 and Cys187 are oxidised to a cystine. 2 residues coordinate serotonin: Asp116 and Cys120. A DRY motif; important for ligand-induced conformation changes motif is present at residues 133–135 (DRY). The Cytoplasmic portion of the chain corresponds to 133–152 (DRYWAITDPIDYVNKRTPRR). The chain crosses the membrane as a helical span at residues 153–174 (AAALISLTWLIGFLISIPPMLG). Residues 175-193 (WRTPEDRSDPDACTISKDH) lie on the Extracellular side of the membrane. A helical transmembrane segment spans residues 194–216 (GYTIYSTFGAFYIPLLLMLVLYG). Topologically, residues 217-346 (RIFRAARFRI…LARERKTVKT (130 aa)) are cytoplasmic. A disordered region spans residues 235-263 (KTGADTHHGASPAPQPKKSVNGESGSRNW). Positions 314, 345, 346, and 352 each coordinate 1D-myo-inositol 4-phosphate. A helical transmembrane segment spans residues 347–370 (LGIIMGTFILCWLPFFIVALVLPF). Topologically, residues 371 to 378 (CESSCHMP) are extracellular. Residues 379 to 403 (TLLGAIINWLGYSNSLLNPVIYAYF) form a helical membrane-spanning segment. Residues 396–400 (NPVIY) carry the NPxxY motif; important for ligand-induced conformation changes and signaling motif. 1D-myo-inositol 4-phosphate is bound by residues Phe403, Asn404, and Lys405. Over 404–422 (NKDFQNAFKKIIKCKFCRQ) the chain is Cytoplasmic.

It belongs to the G-protein coupled receptor 1 family. 5-hydroxytryptamine receptor subfamily. HTR1A sub-subfamily. As to quaternary structure, heterodimer; heterodimerizes with GPER1. Interacts with YIF1B. Interacts with GPR39 and GALR1.

Its subcellular location is the cell membrane. The protein resides in the cell projection. The protein localises to the dendrite. With respect to regulation, G-protein coupled receptor activity is regulated by lipids: phosphatidylinositol 4-phosphate increases HTR1A-mediated activity. Functionally, G-protein coupled receptor for 5-hydroxytryptamine (serotonin). Also functions as a receptor for various drugs and psychoactive substances. Ligand binding causes a conformation change that triggers signaling via guanine nucleotide-binding proteins (G proteins) and modulates the activity of downstream effectors, such as adenylate cyclase. HTR1A is coupled to G(i)/G(o) G alpha proteins and mediates inhibitory neurotransmission: signaling inhibits adenylate cyclase activity and activates a phosphatidylinositol-calcium second messenger system that regulates the release of Ca(2+) ions from intracellular stores. Beta-arrestin family members regulate signaling by mediating both receptor desensitization and resensitization processes. This is 5-hydroxytryptamine receptor 1A (HTR1A) from Pongo pygmaeus (Bornean orangutan).